Reading from the N-terminus, the 483-residue chain is Glutamyl-tRNA(Gln) amidotransferase subunit A (483 aa).

Active-site charge relay system residues include Lys-76 and Ser-151. Ser-175 functions as the Acyl-ester intermediate in the catalytic mechanism.

This sequence belongs to the amidase family. GatA subfamily. As to quaternary structure, heterotrimer of A, B and C subunits.

It catalyses the reaction L-glutamyl-tRNA(Gln) + L-glutamine + ATP + H2O = L-glutaminyl-tRNA(Gln) + L-glutamate + ADP + phosphate + H(+). Its function is as follows. Allows the formation of correctly charged Gln-tRNA(Gln) through the transamidation of misacylated Glu-tRNA(Gln) in organisms which lack glutaminyl-tRNA synthetase. The reaction takes place in the presence of glutamine and ATP through an activated gamma-phospho-Glu-tRNA(Gln). The polypeptide is Glutamyl-tRNA(Gln) amidotransferase subunit A (Pseudomonas putida (strain GB-1)).